The following is a 142-amino-acid chain: Large ribosomal subunit protein uL13 (142 aa).

The protein belongs to the universal ribosomal protein uL13 family. As to quaternary structure, part of the 50S ribosomal subunit.

Its function is as follows. This protein is one of the early assembly proteins of the 50S ribosomal subunit, although it is not seen to bind rRNA by itself. It is important during the early stages of 50S assembly. The protein is Large ribosomal subunit protein uL13 of Pyrococcus furiosus (strain ATCC 43587 / DSM 3638 / JCM 8422 / Vc1).